A 197-amino-acid chain; its full sequence is Brain acid soluble protein 1 homolog (197 aa).

Positions 1–11 (MGGKLSKKKKG) are enriched in basic residues. The segment at 1–197 (MGGKLSKKKK…NKEQAVAVQD (197 aa)) is disordered. A lipid anchor (N-myristoyl glycine) is attached at glycine 2. Basic and acidic residues-rich tracts occupy residues 15-26 (NDEKAKEKDAKT) and 35-44 (EAPKENKEDA). Residues 45–66 (AAATETTNDTAAAAKEATPTAD) are compositionally biased toward low complexity. The span at 72 to 87 (PKEEEKSAAPPKKEEP) shows a compositional bias: basic and acidic residues. A compositionally biased stretch (low complexity) spans 88 to 98 (AANANANAPKA). Basic and acidic residues-rich tracts occupy residues 99–113 (SDAKTSEAAKAEPAK) and 134–144 (NEKEPAKEAAK). Positions 145 to 155 (DPAPAVAAASE) are enriched in low complexity. Over residues 156–166 (SKPDAESKKTE) the composition is skewed to basic and acidic residues.

It belongs to the BASP1 family.

It localises to the cell membrane. The sequence is that of Brain acid soluble protein 1 homolog (basp1) from Danio rerio (Zebrafish).